The primary structure comprises 316 residues: GTP cyclohydrolase FolE2 1 (316 aa).

Belongs to the GTP cyclohydrolase IV family.

The enzyme catalyses GTP + H2O = 7,8-dihydroneopterin 3'-triphosphate + formate + H(+). It functions in the pathway cofactor biosynthesis; 7,8-dihydroneopterin triphosphate biosynthesis; 7,8-dihydroneopterin triphosphate from GTP: step 1/1. Its function is as follows. Converts GTP to 7,8-dihydroneopterin triphosphate. In Burkholderia orbicola (strain AU 1054), this protein is GTP cyclohydrolase FolE2 1.